A 291-amino-acid polypeptide reads, in one-letter code: Phosphoribosylaminoimidazole-succinocarboxamide synthase (291 aa).

Belongs to the SAICAR synthetase family.

The catalysed reaction is 5-amino-1-(5-phospho-D-ribosyl)imidazole-4-carboxylate + L-aspartate + ATP = (2S)-2-[5-amino-1-(5-phospho-beta-D-ribosyl)imidazole-4-carboxamido]succinate + ADP + phosphate + 2 H(+). Its pathway is purine metabolism; IMP biosynthesis via de novo pathway; 5-amino-1-(5-phospho-D-ribosyl)imidazole-4-carboxamide from 5-amino-1-(5-phospho-D-ribosyl)imidazole-4-carboxylate: step 1/2. This is Phosphoribosylaminoimidazole-succinocarboxamide synthase (ADE1) from Candida albicans (Yeast).